The sequence spans 236 residues: 1-(5-phosphoribosyl)-5-[(5-phosphoribosylamino)methylideneamino] imidazole-4-carboxamide isomerase (236 aa).

The active-site Proton acceptor is Asp8. The active-site Proton donor is the Asp128.

The protein belongs to the HisA/HisF family.

The protein localises to the cytoplasm. The enzyme catalyses 1-(5-phospho-beta-D-ribosyl)-5-[(5-phospho-beta-D-ribosylamino)methylideneamino]imidazole-4-carboxamide = 5-[(5-phospho-1-deoxy-D-ribulos-1-ylimino)methylamino]-1-(5-phospho-beta-D-ribosyl)imidazole-4-carboxamide. Its pathway is amino-acid biosynthesis; L-histidine biosynthesis; L-histidine from 5-phospho-alpha-D-ribose 1-diphosphate: step 4/9. The sequence is that of 1-(5-phosphoribosyl)-5-[(5-phosphoribosylamino)methylideneamino] imidazole-4-carboxamide isomerase from Nitrosopumilus maritimus (strain SCM1).